A 131-amino-acid polypeptide reads, in one-letter code: Small ribosomal subunit protein uS8 (131 aa).

It belongs to the universal ribosomal protein uS8 family. In terms of assembly, part of the 30S ribosomal subunit. Contacts proteins S5 and S12.

One of the primary rRNA binding proteins, it binds directly to 16S rRNA central domain where it helps coordinate assembly of the platform of the 30S subunit. The polypeptide is Small ribosomal subunit protein uS8 (Polaromonas sp. (strain JS666 / ATCC BAA-500)).